The following is a 310-amino-acid chain: MILTVTLNPSIDISYCLENFNMDTVNRVTDVSKTPGGKGLNVTRVLSQLGDNVVATGLLGGYFGDFIRSGLDALEIRHQFLSIGGETRHCIAVLHEGQQTEILEKGPHITKDEADAFLNHLKLIFDAATIITVSGSLPKGLPSDYYARLISLANHFNKKVVLDCSGEALRSVLKSSAKPTVIKPNLEELTQLIGKPISYSLDELKSTLQQDIFRGIDWVIVSLGAKGAFAKHGNHYYQVTIPKIEVINPVGSGDATVAGIASALEHQLDDTNLLKRANVLGMLNAQETLTGHINLTYYQELISQIQVKEV.

The protein belongs to the carbohydrate kinase PfkB family. LacC subfamily.

It catalyses the reaction D-tagatofuranose 6-phosphate + ATP = D-tagatofuranose 1,6-bisphosphate + ADP + H(+). It functions in the pathway carbohydrate metabolism; D-tagatose 6-phosphate degradation; D-glyceraldehyde 3-phosphate and glycerone phosphate from D-tagatose 6-phosphate: step 1/2. This Streptococcus agalactiae serotype Ia (strain ATCC 27591 / A909 / CDC SS700) protein is Tagatose-6-phosphate kinase.